We begin with the raw amino-acid sequence, 271 residues long: Colicin-M (271 aa).

The TonB box motif lies at 2–9; it reads ETLTVHAP.

Its function is as follows. Colicins are polypeptide toxins produced by and active against E.coli and closely related bacteria. This is a calcium-requiring inhibitor for murein biosynthesis; it causes lysis of sensitive cells accompanied by murein degradation. The target site is possibly the cytoplasmic membrane. The chain is Colicin-M (cma) from Escherichia coli.